Reading from the N-terminus, the 176-residue chain is NADH-dependent flavin reductase (176 aa).

FAD is bound by residues 39–46 (EDSVHGMT) and 48–49 (NA). NAD(+) is bound at residue serine 52. FAD contacts are provided by residues 63 to 65 (SIS), 69 to 70 (KM), and 95 to 96 (HF). Residues histidine 137 and 157–160 (FYTG) contribute to the NAD(+) site.

This sequence belongs to the non-flavoprotein flavin reductase family. Homodimer. 4-nitrophenol 2-monooxygenase complex consists of an oxygenase component NphA1 and a flavin reductase component NphA2.

It carries out the reaction a reduced flavin + NAD(+) = an oxidized flavin + NADH + 2 H(+). Its function is as follows. Catalyzes the reduction of FAD with the concomitant oxidation of NADH. NAD is the physiological electron donor. Subsequently, the reduced flavins diffuse to the oxygenase component NphA2. The sequence is that of NADH-dependent flavin reductase (nphA2) from Rhodococcus sp.